The chain runs to 481 residues: Probable glycine dehydrogenase (decarboxylating) subunit 2 (481 aa).

An N6-(pyridoxal phosphate)lysine modification is found at Lys-265.

This sequence belongs to the GcvP family. C-terminal subunit subfamily. The glycine cleavage system is composed of four proteins: P, T, L and H. In this organism, the P 'protein' is a heterodimer of two subunits. Pyridoxal 5'-phosphate is required as a cofactor.

It carries out the reaction N(6)-[(R)-lipoyl]-L-lysyl-[glycine-cleavage complex H protein] + glycine + H(+) = N(6)-[(R)-S(8)-aminomethyldihydrolipoyl]-L-lysyl-[glycine-cleavage complex H protein] + CO2. Its function is as follows. The glycine cleavage system catalyzes the degradation of glycine. The P protein binds the alpha-amino group of glycine through its pyridoxal phosphate cofactor; CO(2) is released and the remaining methylamine moiety is then transferred to the lipoamide cofactor of the H protein. This is Probable glycine dehydrogenase (decarboxylating) subunit 2 from Thermosipho melanesiensis (strain DSM 12029 / CIP 104789 / BI429).